A 981-amino-acid chain; its full sequence is Echinoderm microtubule-associated protein-like 4 (981 aa).

M1 is subject to N-acetylmethionine. 2 disordered regions span residues 1 to 20 (MDGF…TSDV) and 57 to 205 (DHVA…PKLI). The tract at residues 1–249 (MDGFAGSLDD…IPSDVDNYDD (249 aa)) is microtubule-binding. Residues S7, S13, S16, and S61 each carry the phosphoserine modification. Residues 14–63 (AASTSDVQDRLSALESRVQQQEDEITVLKAALADVLRRLAISEDHVASVK) are a coiled coil. T96 is modified (phosphothreonine). Positions 114 to 134 (GTEKKKEKPQGQREKKEESHS) are enriched in basic and acidic residues. Position 134 is a phosphoserine; by NEK7 (S134). A compositionally biased stretch (low complexity) spans 137–155 (QSPQIRASPSPQPSSQPLQ). Residue S144 is modified to Phosphoserine; by NEK6. S146 is subject to Phosphoserine; by NEK7. S171 bears the Phosphoserine mark. The span at 176–193 (SPAEKSHNSWENSDDSRN) shows a compositional bias: basic and acidic residues. Phosphoserine is present on S200. Phosphothreonine is present on T201. Y226 bears the Phosphotyrosine mark. T237 is modified (phosphothreonine). WD repeat units lie at residues 259-297 (LKLE…LFNY), 301-348 (TQRH…VWDS), 356-396 (IIGL…VWDW), 403-438 (AEIK…FWTW), and 445-484 (RKQG…IWSK). The residue at position 490 (T490) is a Phosphothreonine; by NEK6. WD repeat units lie at residues 500–538 (QISK…LWDH), 543–579 (EREI…LRGT), 582–621 (DGFQ…LWNS), 625–662 (RLEW…VLDA), 668–704 (VSIH…LYVV), 711–750 (YSRY…YWDI), 760–818 (RSDC…LFQY), and 825–864 (APSH…QWKL). Position 609 is a phosphothreonine; by NEK6 and NEK7 (T609). The span at 881–893 (LTKAPVSSTESVI) shows a compositional bias: polar residues. Residues 881-981 (LTKAPVSSTE…EDQQDPSPSS (101 aa)) are disordered. S891 and S895 each carry phosphoserine. A phosphothreonine mark is found at T897 and T899. S903 carries the phosphoserine modification. The span at 916–931 (ISSSPTLLENSLEQTV) shows a compositional bias: polar residues. Residues 937–946 (HSEEESEEGS) are compositionally biased toward acidic residues. Phosphoserine is present on S978. Phosphoserine; by NEK6 and NEK7 is present on S981.

Belongs to the WD repeat EMAP family. Homotrimer; self-association is mediated by the N-terminal coiled coil. Interacts (via WD repeats) with NUDC. Interacts with alpha- and beta-tubulin during mitosis. In terms of processing, phosphorylated during mitosis. Phosphorylation at Ser-144 and Ser-146 promotes its dissociation from microtubules during mitosis which is required for efficient chromosome congression.

It is found in the cytoplasm. The protein localises to the cytoskeleton. It localises to the spindle. The protein resides in the microtubule organizing center. Its subcellular location is the midbody. Functionally, essential for the formation and stability of microtubules (MTs). Required for the organization of the mitotic spindle and for the proper attachment of kinetochores to MTs. Promotes the recruitment of NUDC to the mitotic spindle for mitotic progression. In Homo sapiens (Human), this protein is Echinoderm microtubule-associated protein-like 4 (EML4).